A 539-amino-acid chain; its full sequence is Glucans biosynthesis protein D (539 aa).

The segment at residues 1–31 (MHRRNLLKASMALAAYTGLSASGLLAARAWA) is a signal peptide (tat-type signal).

The protein belongs to the OpgD/OpgG family. In terms of processing, predicted to be exported by the Tat system. The position of the signal peptide cleavage has not been experimentally proven.

Its subcellular location is the periplasm. Its pathway is glycan metabolism; osmoregulated periplasmic glucan (OPG) biosynthesis. Probably involved in the control of the structural glucose backbone of osmoregulated periplasmic glucans (OPGs). In Pseudomonas fluorescens (strain ATCC BAA-477 / NRRL B-23932 / Pf-5), this protein is Glucans biosynthesis protein D.